The primary structure comprises 303 residues: Glycine--tRNA ligase alpha subunit (303 aa).

This sequence belongs to the class-II aminoacyl-tRNA synthetase family. Tetramer of two alpha and two beta subunits.

It is found in the cytoplasm. The catalysed reaction is tRNA(Gly) + glycine + ATP = glycyl-tRNA(Gly) + AMP + diphosphate. In Klebsiella pneumoniae subsp. pneumoniae (strain ATCC 700721 / MGH 78578), this protein is Glycine--tRNA ligase alpha subunit.